A 277-amino-acid polypeptide reads, in one-letter code: Putative thiosulfate sulfurtransferase mpst-4 (277 aa).

Rhodanese domains follow at residues Asn-15–Ser-153 and Ser-155–Asn-243. Cys-204 functions as the Cysteine persulfide intermediate in the catalytic mechanism.

The enzyme catalyses thiosulfate + hydrogen cyanide = thiocyanate + sulfite + 2 H(+). This is Putative thiosulfate sulfurtransferase mpst-4 from Caenorhabditis elegans.